A 71-amino-acid polypeptide reads, in one-letter code: UPF0346 protein SPT_1257 (71 aa).

The protein belongs to the UPF0346 family.

This Streptococcus pneumoniae (strain Taiwan19F-14) protein is UPF0346 protein SPT_1257.